We begin with the raw amino-acid sequence, 279 residues long: Energy-coupling factor transporter ATP-binding protein EcfA1 (279 aa).

Positions 5 to 240 constitute an ABC transporter domain; sequence IELKKVTFNY…GDELLQLGLD (236 aa). 40–47 contacts ATP; the sequence is GHNGSGKS.

Belongs to the ABC transporter superfamily. Energy-coupling factor EcfA family. As to quaternary structure, forms a stable energy-coupling factor (ECF) transporter complex composed of 2 membrane-embedded substrate-binding proteins (S component), 2 ATP-binding proteins (A component) and 2 transmembrane proteins (T component).

The protein localises to the cell membrane. Functionally, ATP-binding (A) component of a common energy-coupling factor (ECF) ABC-transporter complex. Unlike classic ABC transporters this ECF transporter provides the energy necessary to transport a number of different substrates. The sequence is that of Energy-coupling factor transporter ATP-binding protein EcfA1 from Streptococcus pyogenes serotype M12 (strain MGAS2096).